Reading from the N-terminus, the 143-residue chain is Rheacalcin-2 (143 aa).

Intrachain disulfides connect cysteine 6–cysteine 17, cysteine 34–cysteine 139, and cysteine 114–cysteine 131. A C-type lectin domain is found at 13 to 140 (FDGRCFGFFP…CSDRKPFICE (128 aa)). A phosphoserine mark is found at serine 66 and serine 68.

The protein localises to the secreted. It localises to the extracellular space. Its subcellular location is the extracellular matrix. The protein is Rheacalcin-2 of Rhea americana (Greater rhea).